The chain runs to 222 residues: MSSNNSNQDNFIRFALEAKVLSFGEFKTKAGRLSPYFFNAGEFNDGAHLSALGRYYSKALQESKLQFDMLYGPAYKGITLAAATAIALVDDGINVPYAYNRKEAKDHGEGGVLVGASVKGRVVIIDDVISAGTSVGESVDLIRKAGAEPAAVLIALDRMERSGNAVDIGDKSAVQAVEQEFGLPVISIANLAGLMSFLTASSDTQLTNYLPAVKAYREKYGI.

A 5-phospho-alpha-D-ribose 1-diphosphate-binding site is contributed by lysine 29. Residue 37–38 coordinates orotate; it reads FF. Residues 75 to 76, arginine 101, lysine 102, lysine 105, histidine 107, and 126 to 134 contribute to the 5-phospho-alpha-D-ribose 1-diphosphate site; these read YK and DDVISAGTS. Orotate-binding residues include serine 130 and arginine 158.

It belongs to the purine/pyrimidine phosphoribosyltransferase family. PyrE subfamily. As to quaternary structure, homodimer. Requires Mg(2+) as cofactor.

The catalysed reaction is orotidine 5'-phosphate + diphosphate = orotate + 5-phospho-alpha-D-ribose 1-diphosphate. It participates in pyrimidine metabolism; UMP biosynthesis via de novo pathway; UMP from orotate: step 1/2. Functionally, catalyzes the transfer of a ribosyl phosphate group from 5-phosphoribose 1-diphosphate to orotate, leading to the formation of orotidine monophosphate (OMP). In Polynucleobacter necessarius subsp. necessarius (strain STIR1), this protein is Orotate phosphoribosyltransferase.